The chain runs to 456 residues: Bifunctional protein GlmU (456 aa).

The tract at residues 1–229 (MLNSAMSVVI…ISETDGVNNR (229 aa)) is pyrophosphorylase. Residues 11 to 14 (LAAG), lysine 25, glutamine 76, 81 to 82 (GT), 103 to 105 (YGD), glycine 140, glutamate 154, asparagine 169, and asparagine 227 contribute to the UDP-N-acetyl-alpha-D-glucosamine site. Aspartate 105 contacts Mg(2+). Asparagine 227 provides a ligand contact to Mg(2+). Positions 230–250 (LQLSRLERIYQAEQAEKLLLS) are linker. Residues 251–456 (GVMLRDPARF…QGWQRPVKKK (206 aa)) form an N-acetyltransferase region. The UDP-N-acetyl-alpha-D-glucosamine site is built by arginine 333 and lysine 351. Residue histidine 363 is the Proton acceptor of the active site. Residues tyrosine 366 and asparagine 377 each contribute to the UDP-N-acetyl-alpha-D-glucosamine site. Acetyl-CoA contacts are provided by residues alanine 380, 386-387 (NY), serine 405, alanine 423, and arginine 440.

In the N-terminal section; belongs to the N-acetylglucosamine-1-phosphate uridyltransferase family. This sequence in the C-terminal section; belongs to the transferase hexapeptide repeat family. Homotrimer. Mg(2+) serves as cofactor.

The protein resides in the cytoplasm. The enzyme catalyses alpha-D-glucosamine 1-phosphate + acetyl-CoA = N-acetyl-alpha-D-glucosamine 1-phosphate + CoA + H(+). It carries out the reaction N-acetyl-alpha-D-glucosamine 1-phosphate + UTP + H(+) = UDP-N-acetyl-alpha-D-glucosamine + diphosphate. The protein operates within nucleotide-sugar biosynthesis; UDP-N-acetyl-alpha-D-glucosamine biosynthesis; N-acetyl-alpha-D-glucosamine 1-phosphate from alpha-D-glucosamine 6-phosphate (route II): step 2/2. It functions in the pathway nucleotide-sugar biosynthesis; UDP-N-acetyl-alpha-D-glucosamine biosynthesis; UDP-N-acetyl-alpha-D-glucosamine from N-acetyl-alpha-D-glucosamine 1-phosphate: step 1/1. It participates in bacterial outer membrane biogenesis; LPS lipid A biosynthesis. In terms of biological role, catalyzes the last two sequential reactions in the de novo biosynthetic pathway for UDP-N-acetylglucosamine (UDP-GlcNAc). The C-terminal domain catalyzes the transfer of acetyl group from acetyl coenzyme A to glucosamine-1-phosphate (GlcN-1-P) to produce N-acetylglucosamine-1-phosphate (GlcNAc-1-P), which is converted into UDP-GlcNAc by the transfer of uridine 5-monophosphate (from uridine 5-triphosphate), a reaction catalyzed by the N-terminal domain. This is Bifunctional protein GlmU from Salmonella choleraesuis (strain SC-B67).